The following is a 114-amino-acid chain: Small ribosomal subunit protein uS17 (114 aa).

The protein belongs to the universal ribosomal protein uS17 family. In terms of assembly, part of the 30S ribosomal subunit.

One of the primary rRNA binding proteins, it binds specifically to the 5'-end of 16S ribosomal RNA. This is Small ribosomal subunit protein uS17 from Aeropyrum pernix (strain ATCC 700893 / DSM 11879 / JCM 9820 / NBRC 100138 / K1).